A 270-amino-acid chain; its full sequence is Shikimate dehydrogenase (NADP(+)) (270 aa).

Shikimate-binding positions include 14 to 16 and threonine 61; that span reads SLS. Catalysis depends on lysine 65, which acts as the Proton acceptor. Aspartate 77 contacts NADP(+). Residues asparagine 86 and aspartate 101 each coordinate shikimate. Residues 125-129 and isoleucine 210 each bind NADP(+); that span reads GNGGA. Tyrosine 212 is a shikimate binding site. Residue glycine 233 coordinates NADP(+).

The protein belongs to the shikimate dehydrogenase family. Homodimer.

It carries out the reaction shikimate + NADP(+) = 3-dehydroshikimate + NADPH + H(+). The protein operates within metabolic intermediate biosynthesis; chorismate biosynthesis; chorismate from D-erythrose 4-phosphate and phosphoenolpyruvate: step 4/7. Its function is as follows. Involved in the biosynthesis of the chorismate, which leads to the biosynthesis of aromatic amino acids. Catalyzes the reversible NADPH linked reduction of 3-dehydroshikimate (DHSA) to yield shikimate (SA). In Clostridium beijerinckii (strain ATCC 51743 / NCIMB 8052) (Clostridium acetobutylicum), this protein is Shikimate dehydrogenase (NADP(+)).